Reading from the N-terminus, the 208-residue chain is Small ribosomal subunit protein eS8 (208 aa).

The segment at 1 to 27 (MGISRDNWHKRRRTGGKRKPVHKKRKY) is disordered. A compositionally biased stretch (basic residues) spans 8-26 (WHKRRRTGGKRKPVHKKRK).

It belongs to the eukaryotic ribosomal protein eS8 family. Component of the small ribosomal subunit. Identified in a IGF2BP1-dependent mRNP granule complex containing untranslated mRNAs. Part of the small subunit (SSU) processome, composed of more than 70 proteins and the RNA chaperone small nucleolar RNA (snoRNA) U3.

It is found in the cytoplasm. The protein localises to the membrane. It localises to the nucleus. The protein resides in the nucleolus. Functionally, component of the small ribosomal subunit. The ribosome is a large ribonucleoprotein complex responsible for the synthesis of proteins in the cell. Part of the small subunit (SSU) processome, first precursor of the small eukaryotic ribosomal subunit. During the assembly of the SSU processome in the nucleolus, many ribosome biogenesis factors, an RNA chaperone and ribosomal proteins associate with the nascent pre-rRNA and work in concert to generate RNA folding, modifications, rearrangements and cleavage as well as targeted degradation of pre-ribosomal RNA by the RNA exosome. This is Small ribosomal subunit protein eS8 (rps8) from Danio rerio (Zebrafish).